Reading from the N-terminus, the 175-residue chain is Protein-export protein SecB (175 aa).

A disordered region spans residues 154 to 175 (QQGGNNNGSDSGIILPPGTTRQ).

Belongs to the SecB family. Homotetramer, a dimer of dimers. One homotetramer interacts with 1 SecA dimer.

The protein localises to the cytoplasm. Functionally, one of the proteins required for the normal export of preproteins out of the cell cytoplasm. It is a molecular chaperone that binds to a subset of precursor proteins, maintaining them in a translocation-competent state. It also specifically binds to its receptor SecA. The chain is Protein-export protein SecB from Bordetella petrii (strain ATCC BAA-461 / DSM 12804 / CCUG 43448).